Consider the following 177-residue polypeptide: Protein GrpE (177 aa).

Composition is skewed to basic and acidic residues over residues 1–19 and 29–41; these read MAKH…KETV and SPEK…ANER. Residues 1 to 41 form a disordered region; sequence MAKHKHEEHPEDVEVKETVETAEQAESASPEKSELELANER.

It belongs to the GrpE family. Homodimer.

The protein localises to the cytoplasm. In terms of biological role, participates actively in the response to hyperosmotic and heat shock by preventing the aggregation of stress-denatured proteins, in association with DnaK and GrpE. It is the nucleotide exchange factor for DnaK and may function as a thermosensor. Unfolded proteins bind initially to DnaJ; upon interaction with the DnaJ-bound protein, DnaK hydrolyzes its bound ATP, resulting in the formation of a stable complex. GrpE releases ADP from DnaK; ATP binding to DnaK triggers the release of the substrate protein, thus completing the reaction cycle. Several rounds of ATP-dependent interactions between DnaJ, DnaK and GrpE are required for fully efficient folding. In Streptococcus gordonii (strain Challis / ATCC 35105 / BCRC 15272 / CH1 / DL1 / V288), this protein is Protein GrpE.